The chain runs to 95 residues: Glutamyl-tRNA(Gln) amidotransferase subunit C (95 aa).

This sequence belongs to the GatC family. As to quaternary structure, heterotrimer of A, B and C subunits.

The enzyme catalyses L-glutamyl-tRNA(Gln) + L-glutamine + ATP + H2O = L-glutaminyl-tRNA(Gln) + L-glutamate + ADP + phosphate + H(+). It catalyses the reaction L-aspartyl-tRNA(Asn) + L-glutamine + ATP + H2O = L-asparaginyl-tRNA(Asn) + L-glutamate + ADP + phosphate + 2 H(+). Functionally, allows the formation of correctly charged Asn-tRNA(Asn) or Gln-tRNA(Gln) through the transamidation of misacylated Asp-tRNA(Asn) or Glu-tRNA(Gln) in organisms which lack either or both of asparaginyl-tRNA or glutaminyl-tRNA synthetases. The reaction takes place in the presence of glutamine and ATP through an activated phospho-Asp-tRNA(Asn) or phospho-Glu-tRNA(Gln). This chain is Glutamyl-tRNA(Gln) amidotransferase subunit C, found in Moraxella catarrhalis (Branhamella catarrhalis).